The following is a 384-amino-acid chain: MYLKTVQLRSFRNYREQQVNFESQKTIIVGNNAQGKSNLLEAVELLATLKSHRVSRDRDLVLEGATTGQILATLERAYGLAELGLILRVSGRRTVILNQEPLRRQLDFLGVLNAVQFSSLDLDLVRGSPESRRSWIDTLLVQLEPIYAHILSQYYQVLKQRNALLKKIRQQEEDSQNPSLSSEQLSNDISQLKLWDSQLAETGSRVTRRRARVLERLTPLAQKWHANISGKTEQLEIQYMPNVNWTEDEPMQVQQAFLEKIEKRRIAEQQLGTTVVGPHRDEIEFIINQTPAKYYGSQGQQRTLVLALKLAELHLIEEVVGEPPLLLLDDVLAELDPHRQNQLLDAIEDRFQTLITTTHLNSFETKWLKSSQILSIDGGQIRDF.

30-37 (GNNAQGKS) contributes to the ATP binding site.

This sequence belongs to the RecF family.

It localises to the cytoplasm. Functionally, the RecF protein is involved in DNA metabolism; it is required for DNA replication and normal SOS inducibility. RecF binds preferentially to single-stranded, linear DNA. It also seems to bind ATP. The chain is DNA replication and repair protein RecF from Gloeothece citriformis (strain PCC 7424) (Cyanothece sp. (strain PCC 7424)).